The chain runs to 227 residues: 27 kDa glycoprotein (227 aa).

A signal peptide spans 1–17 (MMWKTVLITIFAAGVLA). Asn-118 and Asn-173 each carry an N-linked (GlcNAc...) asparagine glycan.

This sequence belongs to the UPF0408 family. In terms of tissue distribution, expressed in the subesophageal body, fat bodies, hemocytes, midgut and Malpighian tubules. Not expressed in silk glands.

The protein resides in the secreted. The sequence is that of 27 kDa glycoprotein from Bombyx mori (Silk moth).